A 270-amino-acid polypeptide reads, in one-letter code: Nodule lectin (270 aa).

The signal sequence occupies residues 1-33 (MAFYRTNLPTRELFSLVSVVIVLLATNINSVQA). Positions 34 to 41 (LSFNFTKL) are excised as a propeptide. Asparagine 134 is a glycosylation site (N-linked (GlcNAc...) asparagine).

Belongs to the leguminous lectin family. In terms of processing, glycosylated in a boron-dependent manner. Glycosylation is required for localization to symbiosomes. 3 different glycosylation variants, NLEC-1A, NLEC-1B and NLEC-1C, have been identified. As to expression, expressed in nodules of Rhizobium-infected and uninfected roots and in the root stele near the nodule attachment point. In roots which have been colonized by the endomycorrhizal fungus G.versiforme, detected only in cortical cells colonized by the fungus, mainly those containing arbuscules.

It localises to the symbiosome. Its subcellular location is the peribacteroid space. It is found in the peribacteroid membrane. Involved in symbiosome development. This is Nodule lectin (NLEC1) from Pisum sativum (Garden pea).